The following is a 564-amino-acid chain: DNA ligase B (564 aa).

Lys130 functions as the N6-AMP-lysine intermediate in the catalytic mechanism.

The protein belongs to the NAD-dependent DNA ligase family. LigB subfamily.

The enzyme catalyses NAD(+) + (deoxyribonucleotide)n-3'-hydroxyl + 5'-phospho-(deoxyribonucleotide)m = (deoxyribonucleotide)n+m + AMP + beta-nicotinamide D-nucleotide.. Functionally, catalyzes the formation of phosphodiester linkages between 5'-phosphoryl and 3'-hydroxyl groups in double-stranded DNA using NAD as a coenzyme and as the energy source for the reaction. This Klebsiella pneumoniae subsp. pneumoniae (strain ATCC 700721 / MGH 78578) protein is DNA ligase B.